Here is a 178-residue protein sequence, read N- to C-terminus: ATP-dependent protease subunit HslV (178 aa).

The active site involves T7. Positions 162, 165, and 168 each coordinate Na(+).

This sequence belongs to the peptidase T1B family. HslV subfamily. As to quaternary structure, a double ring-shaped homohexamer of HslV is capped on each side by a ring-shaped HslU homohexamer. The assembly of the HslU/HslV complex is dependent on binding of ATP.

The protein localises to the cytoplasm. The enzyme catalyses ATP-dependent cleavage of peptide bonds with broad specificity.. Its activity is regulated as follows. Allosterically activated by HslU binding. Protease subunit of a proteasome-like degradation complex believed to be a general protein degrading machinery. The polypeptide is ATP-dependent protease subunit HslV (Cupriavidus pinatubonensis (strain JMP 134 / LMG 1197) (Cupriavidus necator (strain JMP 134))).